Reading from the N-terminus, the 348-residue chain is Dihydroorotase (348 aa).

Residues His-17 and His-19 each coordinate Zn(2+). Substrate-binding positions include 19–21 and Asn-45; that span reads HLR. Residues Lys-103, His-140, and His-178 each contribute to the Zn(2+) site. Lys-103 bears the N6-carboxylysine mark. Substrate is bound at residue His-140. Leu-223 is a binding site for substrate. Residue Asp-251 participates in Zn(2+) binding. The active site involves Asp-251. His-255 and Ala-267 together coordinate substrate.

It belongs to the metallo-dependent hydrolases superfamily. DHOase family. Class II DHOase subfamily. As to quaternary structure, homodimer. Requires Zn(2+) as cofactor.

It catalyses the reaction (S)-dihydroorotate + H2O = N-carbamoyl-L-aspartate + H(+). It functions in the pathway pyrimidine metabolism; UMP biosynthesis via de novo pathway; (S)-dihydroorotate from bicarbonate: step 3/3. Catalyzes the reversible cyclization of carbamoyl aspartate to dihydroorotate. The sequence is that of Dihydroorotase from Yersinia pseudotuberculosis serotype O:1b (strain IP 31758).